A 328-amino-acid polypeptide reads, in one-letter code: MPASSDKLQPKDQQTIELEQKLAVQSIRVFLQSKTSYDVLPVSYRLIVLDTSLLVKKSLNILLQNNVVSAPLWDAQTSKFAGLLTSSDFINVIQYYFHNPDKFELVDKLQLNGLKDIERAIGIQPYDTRSIHPFRPLYEACVKMIESRSRRIPLIDQDEETQREIVVSVLTQYRILKFVALNCKEIRYLKRPLRELDIISTNNIMSCQMSTPVIDVIQLLTLAGGVSSVPIVDEQGKLVNVYEAVDVLGLIKGGIYNDLSLSVGEALMRRSDDFEGVFTCTENDKLSSILDTVRKSRVHRFFVVDSNGFLTGVLTLSDILKYILFAES.

CBS domains are found at residues 42–103, 123–186, 199–259, and 268–328; these read VSYR…PDKF, IQPY…CKEI, ISTN…YNDL, and MRRS…FAES. ADP contacts are provided by residues isoleucine 47, arginine 150, arginine 151, 171–174, 227–228, and 297–299; these read TQYR, SS, and RVH. AMP is bound at residue arginine 150. An ATP-binding site is contributed by arginine 150. 227–228 serves as a coordination point for AMP; sequence SS. 227–228 contacts ATP; sequence SS. ATP is bound by residues arginine 300 and 313–318; that span reads VLTLSD. Position 315–318 (315–318) interacts with ADP; that stretch reads TLSD. AMP is bound at residue 315–318; it reads TLSD.

The protein belongs to the 5'-AMP-activated protein kinase gamma subunit family. In terms of assembly, AMPK is a heterotrimer of an alpha catalytic subunit, a beta and a gamma non-catalytic subunits.

The protein localises to the nucleus. It is found in the cytoplasm. In terms of biological role, adenine nucleotides-binding subunit gamma of AMP-activated protein kinase (AMPK), an energy sensor protein kinase that plays a key role in regulating cellular energy metabolism. In response to reduction of intracellular ATP levels, AMPK activates energy-producing pathways and inhibits energy-consuming processes: inhibits protein, carbohydrate and lipid biosynthesis, as well as cell growth and proliferation. AMPK acts via direct phosphorylation of metabolic enzymes, and by longer-term effects via phosphorylation of transcription regulators. Gamma non-catalytic subunit mediates binding to AMP, ADP and ATP, leading to activate or inhibit AMPK: AMP-binding results in allosteric activation of alpha catalytic subunit (SNF1) both by inducing phosphorylation and preventing dephosphorylation of catalytic subunits. This chain is 5'-AMP-activated protein kinase subunit gamma (SNF4), found in Kluyveromyces lactis (strain ATCC 8585 / CBS 2359 / DSM 70799 / NBRC 1267 / NRRL Y-1140 / WM37) (Yeast).